The primary structure comprises 309 residues: Large ribosomal subunit protein uL22m (309 aa).

The N-terminal 25 residues, 1-25 (MNFHTARISQVGVISRALLSSVSRR), are a transit peptide targeting the mitochondrion. A disordered region spans residues 40–63 (SLFGSITENKPKEGKNRGDEDAGS). The segment covering 48 to 59 (NKPKEGKNRGDE) has biased composition (basic and acidic residues).

The protein belongs to the universal ribosomal protein uL22 family. As to quaternary structure, component of the mitochondrial large ribosomal subunit (mt-LSU). Mature yeast 74S mitochondrial ribosomes consist of a small (37S) and a large (54S) subunit. The 37S small subunit contains a 15S ribosomal RNA (15S mt-rRNA) and 34 different proteins. The 54S large subunit contains a 21S rRNA (21S mt-rRNA) and 46 different proteins. uL22m forms the wall of the exit tunnel.

It is found in the mitochondrion. Its function is as follows. Component of the mitochondrial ribosome (mitoribosome), a dedicated translation machinery responsible for the synthesis of mitochondrial genome-encoded proteins, including at least some of the essential transmembrane subunits of the mitochondrial respiratory chain. The mitoribosomes are attached to the mitochondrial inner membrane and translation products are cotranslationally integrated into the membrane. The protein is Large ribosomal subunit protein uL22m (MRPL22) of Saccharomyces cerevisiae (strain ATCC 204508 / S288c) (Baker's yeast).